A 151-amino-acid chain; its full sequence is Abdominal ganglion neuropeptide L11 (151 aa).

An N-terminal signal peptide occupies residues methionine 1–alanine 25.

It localises to the secreted. The polypeptide is Abdominal ganglion neuropeptide L11 (Aplysia californica (California sea hare)).